We begin with the raw amino-acid sequence, 219 residues long: Ribosome maturation factor RimP (219 aa).

Disordered stretches follow at residues 1 to 38 (MTQR…LATR) and 189 to 219 (VEFT…DEER). The span at 198–219 (DAFDGTDEAGDFDDDDVEDEER) shows a compositional bias: acidic residues.

This sequence belongs to the RimP family.

The protein resides in the cytoplasm. Required for maturation of 30S ribosomal subunits. The polypeptide is Ribosome maturation factor RimP (Salinispora arenicola (strain CNS-205)).